We begin with the raw amino-acid sequence, 309 residues long: Prepilin leader peptidase/N-methyltransferase (309 aa).

Residues 35 to 55 (MQLAFAIVLGLVVGSFLNVVV) traverse the membrane as a helical segment. Zn(2+) contacts are provided by C96, C99, C121, and C124. 6 helical membrane-spanning segments follow: residues 147–167 (LALF…AALL), 183–203 (LTLP…FASL), 207–227 (VIGA…FKLL), 230–250 (IEGI…WLGW), 253–273 (LPQV…VATW), and 288–308 (FLAA…LLLG).

Belongs to the peptidase A24 family. Zn(2+) serves as cofactor.

The protein localises to the cell inner membrane. It catalyses the reaction Typically cleaves a -Gly-|-Phe- bond to release an N-terminal, basic peptide of 5-8 residues from type IV prepilin, and then N-methylates the new N-terminal amino group, the methyl donor being S-adenosyl-L-methionine.. Plays an essential role in type IV pili and type II pseudopili formation by proteolytically removing the leader sequence from substrate proteins and subsequently monomethylating the alpha-amino group of the newly exposed N-terminal phenylalanine. The protein is Prepilin leader peptidase/N-methyltransferase (gspO) of Burkholderia pseudomallei (strain 1026b).